Here is a 57-residue protein sequence, read N- to C-terminus: uncharacterized protein (57 aa).

This is an uncharacterized protein from Saccharomyces cerevisiae (strain ATCC 204508 / S288c) (Baker's yeast).